A 91-amino-acid chain; its full sequence is Small ribosomal subunit protein uS15c (91 aa).

The protein belongs to the universal ribosomal protein uS15 family. As to quaternary structure, part of the 30S ribosomal subunit.

Its subcellular location is the plastid. It is found in the chloroplast. The sequence is that of Small ribosomal subunit protein uS15c (rps15) from Ceratophyllum demersum (Rigid hornwort).